Consider the following 843-residue polypeptide: DNA-directed RNA polymerase subunit beta' (843 aa).

4 residues coordinate Zn(2+): cysteine 70, cysteine 72, cysteine 85, and cysteine 88. 3 residues coordinate Mg(2+): aspartate 686, aspartate 688, and aspartate 690.

It belongs to the RNA polymerase beta' chain family. RpoC1 subfamily. In plastids the minimal PEP RNA polymerase catalytic core is composed of four subunits: alpha, beta, beta', and beta''. When a (nuclear-encoded) sigma factor is associated with the core the holoenzyme is formed, which can initiate transcription. It depends on Mg(2+) as a cofactor. Zn(2+) serves as cofactor.

It localises to the plastid. It is found in the chloroplast. The catalysed reaction is RNA(n) + a ribonucleoside 5'-triphosphate = RNA(n+1) + diphosphate. DNA-dependent RNA polymerase catalyzes the transcription of DNA into RNA using the four ribonucleoside triphosphates as substrates. The sequence is that of DNA-directed RNA polymerase subunit beta' from Trieres chinensis (Marine centric diatom).